Here is a 712-residue protein sequence, read N- to C-terminus: Protein SDA1 homolog (712 aa).

A Phosphothreonine modification is found at threonine 234. Serine 236 bears the Phosphoserine mark. Disordered regions lie at residues 488–573 and 662–712; these read TIDI…DMRI and VNEH…KKMK. Acidic residues-rich tracts occupy residues 491-501 and 516-559; these read IESEDDTDSND and GADD…ESGE. The span at 560-572 shows a compositional bias: basic and acidic residues; sequence ESAKAKKEKKDMR. Composition is skewed to basic residues over residues 671–692 and 700–712; these read REKR…KVKK and ALRK…KKMK.

This sequence belongs to the SDA1 family.

Its subcellular location is the nucleus. It localises to the nucleolus. Functionally, required for 60S pre-ribosomal subunits export to the cytoplasm. The sequence is that of Protein SDA1 homolog (Mys45A) from Drosophila melanogaster (Fruit fly).